Consider the following 801-residue polypeptide: Phosphatidylinositol 3-kinase pik3 (801 aa).

One can recognise a C2 PI3K-type domain in the interval 14–166 (VTARFLVKFC…RLDGLLLKLQ (153 aa)). Positions 257 to 439 (DKDLKPNSKI…SSVMFLFQKE (183 aa)) constitute a PIK helical domain. In terms of domain architecture, PI3K/PI4K catalytic spans 515-785 (IPDACTVFKS…LINDSVSALF (271 aa)). Positions 521 to 527 (VFKSTMQ) are G-loop. A catalytic loop region spans residues 654-662 (GVGDRHLDN). An activation loop region spans residues 673 to 694 (HADFGYILGRDPKLFSPAMKLS).

Belongs to the PI3/PI4-kinase family. Component of the autophagy-specific vps34 PI3-kinase complex I composed of vps15, atg6, pik3/vps34, atg14 and atg38. Also a component of the VPS34 PI3-kinase complex II composed of atg6, pik3, vps15 and vps38.

It carries out the reaction a 1,2-diacyl-sn-glycero-3-phospho-(1D-myo-inositol) + ATP = a 1,2-diacyl-sn-glycero-3-phospho-(1D-myo-inositol-3-phosphate) + ADP + H(+). Functionally, phosphatidylinositol 3-kinase that functions as a part of the autophagy-specific VPS34 PI3-kinase complex I that plays a role in autophagosome assembly. This complex is essential to recruit the atg8-phosphatidylinositol conjugate and the atg12-atg5 conjugate to the pre-autophagosomal structure. Also functions as part of the VPS34 PI3-kinase complex II. This chain is Phosphatidylinositol 3-kinase pik3 (pik3), found in Schizosaccharomyces pombe (strain 972 / ATCC 24843) (Fission yeast).